The following is a 400-amino-acid chain: Centrosomal protein CEP57L1 (400 aa).

Ser-45 is subject to Phosphoserine. Coiled coils occupy residues 47-111 and 138-213; these read NNQA…KKDI and NVER…QDRA. Disordered stretches follow at residues 222–261 and 314–400; these read REPPQQRDHKFRTPTFERKKPFRTTSQARANPQSSGEPVS and MESK…KWEQ. Residues 244–258 are compositionally biased toward polar residues; the sequence is RTTSQARANPQSSGE. Positions 261 to 345 form a coiled coil; the sequence is SICDSLSELL…EKIENSRINE (85 aa). Basic and acidic residues-rich tracts occupy residues 314–342 and 391–400; these read MESKGDQISKLKKHQDSVRKLQEKIENSR and LRRDDIKWEQ.

Belongs to the translokin family.

The protein localises to the cytoplasm. Its subcellular location is the cytoskeleton. It is found in the microtubule organizing center. The protein resides in the centrosome. In terms of biological role, centrosomal protein which may be required for microtubule attachment to centrosomes. The protein is Centrosomal protein CEP57L1 (Cep57l1) of Mus musculus (Mouse).